The sequence spans 547 residues: Chaperonin GroEL (547 aa).

Residues 30–33 (TLGP), Lys-51, 87–91 (DGTTT), Gly-415, and Asp-496 each bind ATP.

The protein belongs to the chaperonin (HSP60) family. As to quaternary structure, forms a cylinder of 14 subunits composed of two heptameric rings stacked back-to-back. Interacts with the co-chaperonin GroES.

It localises to the cytoplasm. It catalyses the reaction ATP + H2O + a folded polypeptide = ADP + phosphate + an unfolded polypeptide.. Functionally, together with its co-chaperonin GroES, plays an essential role in assisting protein folding. The GroEL-GroES system forms a nano-cage that allows encapsulation of the non-native substrate proteins and provides a physical environment optimized to promote and accelerate protein folding. The protein is Chaperonin GroEL of Chlorobium limicola (strain DSM 245 / NBRC 103803 / 6330).